The primary structure comprises 299 residues: MDPTLISLGALALAGAAATVSGCAEDLESDVGSQSNPNSQVQLGPQMGNIHRYFNKAISGEPVSYGLYVAVAGTIAWALINAGLNAVLAIIVGSGVAAIVHGAYSVSAFLGRIVGQSKKFGQPVYMDVLTSHIGPIVGHGFIAVFTMTLAAYLATTALGNPFPLPLVALIFGITVGAIGSSTGDVHYGAEREYQKYPFGGGIPVANQGDIDIYAEYGVRNGLDSSYFCSRFGGPLTGLCFGLIIFLDGWRSILGNIVGGDLVTKTSIALLVGLLVVAVAAVINRKLEVYARNKYGPYRN.

The next 6 membrane-spanning stretches (helical) occupy residues 57–77 (AISG…TIAW), 80–100 (INAG…AAIV), 133–153 (IGPI…AAYL), 158–178 (LGNP…VGAI), 226–246 (YFCS…IIFL), and 262–282 (VTKT…AAVI).

The protein belongs to the MtrE family. The complex is composed of 8 subunits; MtrA, MtrB, MtrC, MtrD, MtrE, MtrF, MtrG and MtrH.

The protein resides in the cell membrane. The catalysed reaction is 5-methyl-5,6,7,8-tetrahydromethanopterin + coenzyme M + 2 Na(+)(in) = 5,6,7,8-tetrahydromethanopterin + methyl-coenzyme M + 2 Na(+)(out). Its pathway is one-carbon metabolism; methanogenesis from CO(2); methyl-coenzyme M from 5,10-methylene-5,6,7,8-tetrahydromethanopterin: step 2/2. In terms of biological role, part of a complex that catalyzes the formation of methyl-coenzyme M and tetrahydromethanopterin from coenzyme M and methyl-tetrahydromethanopterin. This is an energy-conserving, sodium-ion translocating step. This chain is Tetrahydromethanopterin S-methyltransferase subunit E, found in Methanococcus maripaludis (strain C7 / ATCC BAA-1331).